We begin with the raw amino-acid sequence, 196 residues long: MNNEQKVEALLFVAGAEGISVEELSNFTGYAKPAILTMLDNLEKNYEVNSKTALKLIQTGGTYKLVTKPELASILEKYFDRNSRSGLSPAALEILSIVAYRQPITRIEIDQIRGVQSGTTLQNLVLRNLVKVVGRLEEPGRPKTYGTTDEFLDYFGLEDIKDLPKLEKVGEDSELDDSDLFLQEFESKMNLNNKEK.

Belongs to the ScpB family. As to quaternary structure, homodimer. Homodimerization may be required to stabilize the binding of ScpA to the Smc head domains. Component of a cohesin-like complex composed of ScpA, ScpB and the Smc homodimer, in which ScpA and ScpB bind to the head domain of Smc. The presence of the three proteins is required for the association of the complex with DNA.

The protein localises to the cytoplasm. Participates in chromosomal partition during cell division. May act via the formation of a condensin-like complex containing Smc and ScpA that pull DNA away from mid-cell into both cell halves. This Pediococcus pentosaceus (strain ATCC 25745 / CCUG 21536 / LMG 10740 / 183-1w) protein is Segregation and condensation protein B.